A 280-amino-acid polypeptide reads, in one-letter code: Acetyl-coenzyme A carboxylase carboxyl transferase subunit beta (280 aa).

The region spanning 28–280 is the CoA carboxyltransferase N-terminal domain; it reads IMTKCPSCRT…TLTKLLAMHQ (253 aa). The Zn(2+) site is built by Cys32, Cys35, Cys51, and Cys54. Residues 32–54 form a C4-type zinc finger; that stretch reads CPSCRTIMYTKDLKKNLSVCRTC.

It belongs to the AccD/PCCB family. As to quaternary structure, acetyl-CoA carboxylase is a heterohexamer composed of biotin carboxyl carrier protein (AccB), biotin carboxylase (AccC) and two subunits each of ACCase subunit alpha (AccA) and ACCase subunit beta (AccD). Requires Zn(2+) as cofactor.

Its subcellular location is the cytoplasm. It catalyses the reaction N(6)-carboxybiotinyl-L-lysyl-[protein] + acetyl-CoA = N(6)-biotinyl-L-lysyl-[protein] + malonyl-CoA. It participates in lipid metabolism; malonyl-CoA biosynthesis; malonyl-CoA from acetyl-CoA: step 1/1. Functionally, component of the acetyl coenzyme A carboxylase (ACC) complex. Biotin carboxylase (BC) catalyzes the carboxylation of biotin on its carrier protein (BCCP) and then the CO(2) group is transferred by the transcarboxylase to acetyl-CoA to form malonyl-CoA. The polypeptide is Acetyl-coenzyme A carboxylase carboxyl transferase subunit beta (Shouchella clausii (strain KSM-K16) (Alkalihalobacillus clausii)).